The primary structure comprises 424 residues: MEQWKVMVLICMYGAVKEFRPTEPYMYEYQHTVLNMSEQTLNSQVYPIWTYSYLITLIPAFLLTDVFLYKPLLVFEAFSYFLCWVIFVFGKSVWSQQVLEVFYGWATATEIAYFAYIYVKVPKTEYKSATAFTRAALLVGRFLAYALAQLLIGLNWTSYSTLNIISLVAMTIAVFLALILPGVEWKEAYEKKLEDNNVQGNLKEIVDQSSYMDYLRMFFVGLRHNLMAIYRNPLILKWSVWSALSSCIFYQVTNYTQTLWGTLPESANRYNGITEALVPLLGIPADLITRQLNVNWNRWGDLLLAVGSIGQAGLLFWMSQSHHIVVLYLSYIFYRVIYQLTTTIAQSTLAFSLDSRLFGLLFGINTFVALLLQSILTAVVIDWQKLDIRPQFVVYSCYHLVVAFGFAIIFGIWASRRFFKTSTN.

N-linked (GlcNAc...) asparagine glycosylation is present at Asn35. A run of 6 helical transmembrane segments spans residues 48–68 (IWTYSYLITLIPAFLLTDVFL), 71–91 (PLLVFEAFSYFLCWVIFVFGK), 99–119 (LEVFYGWATATEIAYFAYIYV), 136–156 (ALLVGRFLAYALAQLLIGLNW), 164–184 (IISLVAMTIAVFLALILPGVE), and 233–253 (PLILKWSVWSALSSCIFYQVT). N-linked (GlcNAc...) asparagine glycosylation occurs at Asn254. The next 4 membrane-spanning stretches (helical) occupy residues 299-319 (WGDLLLAVGSIGQAGLLFWMS), 324-344 (IVVLYLSYIFYRVIYQLTTTI), 361-381 (LFGINTFVALLLQSILTAVVI), and 392-412 (FVVYSCYHLVVAFGFAIIFGI).

Belongs to the reduced folate carrier (RFC) transporter (TC 2.A.48) family.

The protein localises to the membrane. Unlike folt-1, does not appear to act as a folate transporter. This Caenorhabditis elegans protein is Folate-like transporter 2 (folt-2).